A 482-amino-acid polypeptide reads, in one-letter code: ATP synthase subunit beta, chloroplastic (482 aa).

Position 162–169 (162–169) interacts with ATP; sequence GGAGVGKT.

The protein belongs to the ATPase alpha/beta chains family. As to quaternary structure, F-type ATPases have 2 components, CF(1) - the catalytic core - and CF(0) - the membrane proton channel. CF(1) has five subunits: alpha(3), beta(3), gamma(1), delta(1), epsilon(1). CF(0) has four main subunits: a(1), b(1), b'(1) and c(9-12).

It localises to the plastid. The protein localises to the chloroplast thylakoid membrane. It carries out the reaction ATP + H2O + 4 H(+)(in) = ADP + phosphate + 5 H(+)(out). In terms of biological role, produces ATP from ADP in the presence of a proton gradient across the membrane. The catalytic sites are hosted primarily by the beta subunits. The polypeptide is ATP synthase subunit beta, chloroplastic (Pleurastrum terricola (Filamentous green alga)).